The primary structure comprises 793 residues: Protein translocase subunit SecA 2 (793 aa).

ATP-binding positions include glutamine 77, 95-99 (GEGKT), and aspartate 493.

The protein belongs to the SecA family. Monomer and homodimer (Potential). Part of the accessory SecA2/SecY2 protein translocation apparatus required to export cell wall protein GspB.

It localises to the cell membrane. The protein resides in the cytoplasm. It catalyses the reaction ATP + H2O + cellular proteinSide 1 = ADP + phosphate + cellular proteinSide 2.. Its function is as follows. Part of the accessory SecA2/SecY2 system specifically required to export GspB, a serine-rich repeat cell wall protein encoded upstream in the same operon. The polypeptide is Protein translocase subunit SecA 2 (Streptococcus gordonii).